The primary structure comprises 379 residues: uncharacterized protein (379 aa).

Disordered stretches follow at residues 1 to 37 (MSSI…SGQT), 130 to 150 (VRYS…LSPE), and 332 to 379 (NPPI…RGSR).

The protein belongs to the chlamydial CPn_0499/CT_392/TC_0671 family.

This is an uncharacterized protein from Chlamydia muridarum (strain MoPn / Nigg).